A 428-amino-acid chain; its full sequence is Patatin-like protein 3 (428 aa).

The region spanning 38-252 (LSIDGGGIRG…AANNPTLCAI (215 aa)) is the PNPLA domain. Residues 42 to 47 (GGGIRG) carry the GXGXXG motif. Residues 80 to 84 (GTSTG) carry the GXSXG motif. Catalysis depends on Ser82, which acts as the Nucleophile. Residue Asp239 is the Proton acceptor of the active site. The DGA/G motif lies at 239–241 (DGG). Phosphoserine is present on Ser423.

It belongs to the patatin family. In terms of tissue distribution, expressed specifically in the stigma, ovary and funiculus of the ovary.

Its subcellular location is the cytoplasm. In terms of biological role, possesses non-specific lipolytic acyl hydrolase (LAH) activity. Catalyzes the hydrolysis of the neutral lipids monogalactosyldiacylglycerol (MGDG), digalactosyldiacylglycerol (DGDG) and phosphatidylglycerol (PG), and less efficiently the polar lipids phosphatidylcholine (PC) and phosphatidylinositol (PI), but not the storage lipid triacylglycerol (TAG). May play a role in root development. This chain is Patatin-like protein 3 (PLP3), found in Arabidopsis thaliana (Mouse-ear cress).